The sequence spans 306 residues: Agmatinase (306 aa).

Mn(2+) contacts are provided by His-126, Asp-149, His-151, Asp-153, Asp-230, and Asp-232.

It belongs to the arginase family. Agmatinase subfamily. It depends on Mn(2+) as a cofactor.

It carries out the reaction agmatine + H2O = urea + putrescine. Its pathway is amine and polyamine biosynthesis; putrescine biosynthesis via agmatine pathway; putrescine from agmatine: step 1/1. Catalyzes the formation of putrescine from agmatine. In Shigella dysenteriae serotype 1 (strain Sd197), this protein is Agmatinase.